We begin with the raw amino-acid sequence, 639 residues long: Versicolorin B synthase stcN (639 aa).

Residues 1 to 19 form the signal peptide; the sequence is MPAWSLLVLSALPVVGMFA. FAD is bound by residues 77 to 78 and 98 to 99; these read TA and EA. A glycan (N-linked (GlcNAc...) asparagine) is linked at Asn-109. 164–167 is a binding site for FAD; the sequence is GAML. An N-linked (GlcNAc...) asparagine glycan is attached at Asn-214. Positions 263–301 constitute a PAS domain; the sequence is GFSNGQLLGRSYITHTIHPKTRRRDTASTSYLQTALRTS. Residues Asn-444 and Asn-501 are each glycosylated (N-linked (GlcNAc...) asparagine). Residues Ala-609 and 620-621 each bind FAD; that span reads PM.

It belongs to the GMC oxidoreductase family. In terms of assembly, homodimer. The cofactor is FAD.

It is found in the cytoplasm. The protein resides in the cytosol. The catalysed reaction is (2S-3S)-versiconal hemiacetal = versicolorin B + H2O. It carries out the reaction (S)-5'-oxoaverantin + H(+) = (1'S,5'S)-averufin + H2O. Its pathway is mycotoxin biosynthesis; sterigmatocystin biosynthesis. Functionally, norsolorinic acid reductase; part of the gene cluster that mediates the biosynthesis of sterigmatocystin (ST), a polyketide-derived furanocoumarin which is part of the most toxic and carcinogenic compounds among the known mycotoxins. The first step in the biosynthesis of sterigmatocystin is the production of hexanoate by the fatty acid synthase (FAS) units stcJ and stcK. The polyketide backbone is assembled by the non-reducing polyketide synthase stcA by condensation of the starter hexanoyl-CoA and 7 malonyl-CoA extender units followed by cyclization and release of norsolorinic acid. Norsolorinic acid is the first stable intermediate in the biosynthesis of sterigmatocystin and is converted into averantin (AVN) by the ketoreductase stcE which reduces the hexanoate ketone to an alcohol. Averantin is then oxidized into 5'-hydroxyaverantin (HAVN) by the cytochrome P450 monooxygenase stcF. 5'-hydroxyaverantin is further converted to 5'-oxyaverantin (OAVN) by the 5'-hydroxyaverantin dehydrogenase stcG. The next step is the conversion of OAVN into averufin (AVF) which is catalyzed by a yet to be identified enzyme. The cytochrome P450 monooxygenase stcB and the flavin-binding monooxygenase stcW are both required for the conversion of averufin to 1-hydroxyversicolorone. The esterase stcI probably catalyzes the formation of versiconal hemiacetal acetate from 1-hydroxyversicolorone. The oxydoreductase stcN then probably catalyzes the biosynthetic step from versiconal to versicolorin B (VERB). The next step is performed by the versicolorin B desaturase stcL to produce versicolorin A (VERA). The ketoreductase stcU and the cytochrome P450 monooxygenase stcS are involved in the conversion of versicolorin A to demethylsterigmatocystin. The Baeyer-Villiger oxidas stcQ and the reductase stcR might be involved in the biosynthetic step from versicolorin A to demethylsterigmatocystin. The final step in the biosynthesis of sterigmatocystin is the methylation of demethylsterigmatocystin catalyzed by the methyltransferase stcP. This Emericella nidulans (strain FGSC A4 / ATCC 38163 / CBS 112.46 / NRRL 194 / M139) (Aspergillus nidulans) protein is Versicolorin B synthase stcN.